We begin with the raw amino-acid sequence, 305 residues long: Glutaminase (305 aa).

Substrate contacts are provided by Ser61, Asn113, Glu158, Asn165, Tyr189, Tyr241, and Val259.

This sequence belongs to the glutaminase family. In terms of assembly, homotetramer.

The catalysed reaction is L-glutamine + H2O = L-glutamate + NH4(+). In Alkaliphilus oremlandii (strain OhILAs) (Clostridium oremlandii (strain OhILAs)), this protein is Glutaminase.